A 231-amino-acid polypeptide reads, in one-letter code: Small proline-rich protein 3 (231 aa).

The tract at residues 1 to 104 is disordered; it reads MSSYQQKQPF…GSGYSVVPQP (104 aa). Serine 2 carries the N-acetylserine modification. 21 tandem repeats follow at residues 55-62, 63-70, 71-78, 79-86, 87-94, 95-102, 103-110, 111-118, 119-126, 127-134, 135-142, 143-150, 151-158, 159-166, 167-174, 175-182, 183-190, 191-198, 199-206, 207-214, and 215-222. Positions 55 to 222 are 21 X 8 AA approximate tandem repeats; that stretch reads EQGYVKIPEQ…VQEPNPSIVT (168 aa). Residues 80–94 are compositionally biased toward polar residues; it reads SGNTKVPESGCTSVP. The segment at 188–231 is disordered; the sequence is KVPESGCTSVPGPGYPTVPQPGYTKVQEPNPSIVTPGLSQKKTK. Positions 214 to 231 are enriched in polar residues; the sequence is QEPNPSIVTPGLSQKKTK.

The protein belongs to the cornifin (SPRR) family. In terms of tissue distribution, suprabasal layers of the squamous epithelia of esophagus, tongue and oral mucosa.

It localises to the cytoplasm. Its function is as follows. Can serve as a substrate in transglutaminase-catalyzed cross linking reactions and can function as a cross-linked envelope precursor. The protein is Small proline-rich protein 3 (SPRR3) of Oryctolagus cuniculus (Rabbit).